Reading from the N-terminus, the 379-residue chain is Putative F-box protein At2g33190 (379 aa).

The F-box domain occupies 6 to 53; the sequence is NGWSKLYPDLLRSIFESLSCLDFHRAGTVCSNWYAVSRSCPLYPWRIV.

The protein is Putative F-box protein At2g33190 of Arabidopsis thaliana (Mouse-ear cress).